The sequence spans 573 residues: Ribonuclease J (573 aa).

Positions 1–29 (MENQERKPRRRRRRRPQEGSQGGPQDHVE) are disordered. Zn(2+) is bound by residues histidine 93, histidine 95, aspartate 97, histidine 98, histidine 168, and aspartate 190. Residues 259 to 261 (ASH) and 390 to 394 (HASGH) contribute to the substrate site. Histidine 416 is a Zn(2+) binding site.

It belongs to the metallo-beta-lactamase superfamily. RNA-metabolizing metallo-beta-lactamase-like family. Bacterial RNase J subfamily. In terms of assembly, homodimer. May be a subunit of the RNA degradosome. The cofactor is Zn(2+).

It localises to the cytoplasm. Its function is as follows. An RNase that has endonuclease and possibly 5'-3' exonuclease activity. Probably involved in maturation of rRNA and in some organisms also mRNA maturation and/or decay. The sequence is that of Ribonuclease J from Thermus thermophilus (strain ATCC BAA-163 / DSM 7039 / HB27).